A 238-amino-acid polypeptide reads, in one-letter code: Tritrans,polycis-undecaprenyl-diphosphate synthase (geranylgeranyl-diphosphate specific) (238 aa).

Residue Asp-18 is part of the active site. A Mg(2+)-binding site is contributed by Asp-18. Substrate-binding positions include 19 to 22 (GNRR) and 64 to 66 (STE). The active-site Proton acceptor is Asn-67. Substrate-binding positions include Arg-70, Arg-187, and 193 to 195 (RLS). Position 206 (Glu-206) interacts with Mg(2+).

Belongs to the UPP synthase family. In terms of assembly, homodimer. Mg(2+) serves as cofactor.

It carries out the reaction geranylgeranyl diphosphate + 7 isopentenyl diphosphate = tri-trans,hepta-cis-undecaprenyl diphosphate + 7 diphosphate. Functionally, catalyzes the sequential condensation of isopentenyl diphosphate (IPP) with geranylgeranyl diphosphate (GGPP) to yield (2Z,6Z,10Z,14Z,18Z,22Z,26Z,30E,34E,38E)-undecaprenyl diphosphate (tritrans,heptacis-UPP). It is probably the precursor of glycosyl carrier lipids. The protein is Tritrans,polycis-undecaprenyl-diphosphate synthase (geranylgeranyl-diphosphate specific) of Pyrobaculum aerophilum (strain ATCC 51768 / DSM 7523 / JCM 9630 / CIP 104966 / NBRC 100827 / IM2).